Here is a 486-residue protein sequence, read N- to C-terminus: ATP-dependent rRNA helicase RRP3 (486 aa).

Residues 1-58 are disordered; the sequence is MNGAKRRKVAQDTPRNTKPVAQEKPARAEPKPSSDEESEEESATLEEPSAEETAVDAP. Residues 24–34 show a composition bias toward basic and acidic residues; sequence KPARAEPKPSS. Residues 35–54 show a composition bias toward acidic residues; sequence DEESEEESATLEEPSAEETA. The Q motif signature appears at 60-88; it reads KTFKDLGVNDALCEACEKLNYKYPTPIQE. Residues 91–262 enclose the Helicase ATP-binding domain; it reads IPVALQGRDI…RASLRDPVKV (172 aa). 104–111 lines the ATP pocket; it reads AETGSGKT. Positions 210 to 213 match the DEAD box motif; it reads DEAD. One can recognise a Helicase C-terminal domain in the interval 286 to 434; that stretch reads QKDVHLIYLI…EYPTEKEEVM (149 aa). 2 stretches are compositionally biased toward basic and acidic residues: residues 451-460 and 476-486; these read MKSFTEERGK and RGRDDMDREEG. The disordered stretch occupies residues 451 to 486; that stretch reads MKSFTEERGKKGSTLKGGRGKKGGKRGRDDMDREEG.

Belongs to the DEAD box helicase family. DDX47/RRP3 subfamily. In terms of assembly, interacts with the SSU processome.

It is found in the nucleus. It carries out the reaction ATP + H2O = ADP + phosphate + H(+). Its function is as follows. ATP-dependent rRNA helicase required for pre-ribosomal RNA processing. Involved in the maturation of the 35S-pre-rRNA and to its cleavage to mature 18S rRNA. The sequence is that of ATP-dependent rRNA helicase RRP3 from Gibberella zeae (strain ATCC MYA-4620 / CBS 123657 / FGSC 9075 / NRRL 31084 / PH-1) (Wheat head blight fungus).